Consider the following 174-residue polypeptide: MTQHLFMVGARGCGKTTVGQALARVLGYAFADTDDMLWRSTGKTVAEIVAKEGWTGFRARESEILTSVTQGNAVVATGGGIILSAANRRFMRARGTVVYLHATAQELSRRLRAYPEDDQRPSLTGKPMIEEIAEVLAAREKLYQEAAHHVLDASQPPDDVVSAILQQLYPSAAS.

12–17 (GCGKTT) serves as a coordination point for ATP. 2 residues coordinate Mg(2+): Thr16 and Asp32. 3 residues coordinate substrate: Asp34, Arg58, and Gly79. Residues 112-126 (RAYPEDDQRPSLTGK) form an LID domain region. Residue Arg120 coordinates ATP. Arg139 is a binding site for substrate. Gln155 provides a ligand contact to ATP.

Belongs to the shikimate kinase family. AroL subfamily. Monomer. Mg(2+) is required as a cofactor.

The protein localises to the cytoplasm. The catalysed reaction is shikimate + ATP = 3-phosphoshikimate + ADP + H(+). Its pathway is metabolic intermediate biosynthesis; chorismate biosynthesis; chorismate from D-erythrose 4-phosphate and phosphoenolpyruvate: step 5/7. Catalyzes the specific phosphorylation of the 3-hydroxyl group of shikimic acid using ATP as a cosubstrate. This chain is Shikimate kinase 2, found in Sodalis glossinidius (strain morsitans).